Here is a 446-residue protein sequence, read N- to C-terminus: Glutamine synthetase (446 aa).

The region spanning 15-103 is the GS beta-grasp domain; that stretch reads ENVKFLRLQI…LICDVYYPDG (89 aa). The GS catalytic domain occupies 110 to 446; the sequence is PRYVLKRQIE…WELDRYLATY (337 aa). Mg(2+) is bound by residues E134 and E136. E186 is an ATP binding site. 2 residues coordinate Mg(2+): E191 and E198. L-glutamate-binding positions include 242-243 and G243; that span reads NG. H247 is a binding site for Mg(2+). ATP is bound at residue S251. Positions 300, 306, and 318 each coordinate L-glutamate. 2 residues coordinate ATP: R318 and R323. E335 is a Mg(2+) binding site. Residue R337 coordinates L-glutamate.

This sequence belongs to the glutamine synthetase family. Interacts with GCBP (TTHA1554). It depends on Mg(2+) as a cofactor.

The protein localises to the cytoplasm. The enzyme catalyses L-glutamate + NH4(+) + ATP = L-glutamine + ADP + phosphate + H(+). With respect to regulation, activity increases by approximately two-fold in the presence of GCBP. Catalyzes the ATP-dependent biosynthesis of glutamine from glutamate and ammonia. This chain is Glutamine synthetase, found in Thermus thermophilus (strain ATCC 27634 / DSM 579 / HB8).